The chain runs to 196 residues: Putative 3-methyladenine DNA glycosylase (196 aa).

This sequence belongs to the DNA glycosylase MPG family.

This is Putative 3-methyladenine DNA glycosylase from Bacillus velezensis (strain DSM 23117 / BGSC 10A6 / LMG 26770 / FZB42) (Bacillus amyloliquefaciens subsp. plantarum).